Here is a 196-residue protein sequence, read N- to C-terminus: Pentatricopeptide repeat-containing protein At1g62350 (196 aa).

PPR repeat units lie at residues 70–104 and 105–139; these read DMFF…EVLF and DQHT…PDRP.

It belongs to the PPR family. P subfamily.

The chain is Pentatricopeptide repeat-containing protein At1g62350 from Arabidopsis thaliana (Mouse-ear cress).